We begin with the raw amino-acid sequence, 268 residues long: Tryptophan synthase alpha chain (268 aa).

Catalysis depends on proton acceptor residues Glu-49 and Asp-60.

It belongs to the TrpA family. Tetramer of two alpha and two beta chains.

It catalyses the reaction (1S,2R)-1-C-(indol-3-yl)glycerol 3-phosphate + L-serine = D-glyceraldehyde 3-phosphate + L-tryptophan + H2O. It participates in amino-acid biosynthesis; L-tryptophan biosynthesis; L-tryptophan from chorismate: step 5/5. Functionally, the alpha subunit is responsible for the aldol cleavage of indoleglycerol phosphate to indole and glyceraldehyde 3-phosphate. This is Tryptophan synthase alpha chain from Pectobacterium atrosepticum (strain SCRI 1043 / ATCC BAA-672) (Erwinia carotovora subsp. atroseptica).